The sequence spans 196 residues: Large ribosomal subunit protein bL9 (196 aa).

Belongs to the bacterial ribosomal protein bL9 family.

Functionally, binds to the 23S rRNA. This chain is Large ribosomal subunit protein bL9, found in Bradyrhizobium sp. (strain ORS 278).